The following is a 164-amino-acid chain: Ecotin (164 aa).

A signal peptide spans 1 to 20 (MKMFVPAVVFAALASASAWA). An intrachain disulfide couples Cys-72 to Cys-109.

It belongs to the protease inhibitor I11 (ecotin) family. As to quaternary structure, homodimer.

It localises to the periplasm. Functionally, general inhibitor of pancreatic serine proteases: inhibits chymotrypsin, trypsin, elastases, factor X, kallikrein as well as a variety of other proteases. This is Ecotin from Salmonella enteritidis PT4 (strain P125109).